We begin with the raw amino-acid sequence, 417 residues long: Serine--tRNA ligase (417 aa).

226–228 (TSE) serves as a coordination point for L-serine. ATP is bound by residues 257-259 (RRE) and Val273. Glu280 serves as a coordination point for L-serine. 344-347 (EVTS) contacts ATP. An L-serine-binding site is contributed by Thr379.

The protein belongs to the class-II aminoacyl-tRNA synthetase family. Type-1 seryl-tRNA synthetase subfamily. In terms of assembly, homodimer. The tRNA molecule binds across the dimer.

It localises to the cytoplasm. The enzyme catalyses tRNA(Ser) + L-serine + ATP = L-seryl-tRNA(Ser) + AMP + diphosphate + H(+). It carries out the reaction tRNA(Sec) + L-serine + ATP = L-seryl-tRNA(Sec) + AMP + diphosphate + H(+). Its pathway is aminoacyl-tRNA biosynthesis; selenocysteinyl-tRNA(Sec) biosynthesis; L-seryl-tRNA(Sec) from L-serine and tRNA(Sec): step 1/1. Its function is as follows. Catalyzes the attachment of serine to tRNA(Ser). Is also able to aminoacylate tRNA(Sec) with serine, to form the misacylated tRNA L-seryl-tRNA(Sec), which will be further converted into selenocysteinyl-tRNA(Sec). The chain is Serine--tRNA ligase from Tropheryma whipplei (strain Twist) (Whipple's bacillus).